We begin with the raw amino-acid sequence, 399 residues long: MIQYVTAGESHGPALSAIVDGMPAGVPLTDEAINHQLARRQQGYGRGGRMKIETDKAEVLSGIRFGKTIGSPIAMVIRNRDWQNWTTTMAQFEQPQEAIPAITVPRPGHADLAGCIKYGFEDIRPVIERSSARETAARVAAGACAKLFLKALGIEIGSIVTAIGSAKEEMPQQELAAMLAHGAEAVATQADQSPVRMLSKSAETAAIAAIDEAKANGDTVGGIVDVFITGVPLGFGSYVQHNRRLDADLAAALLSIQAIKGVEIGTAFDNACKYGSQVHDEFIFSESGELTRPTNRAGGIEGSMSSGQVIHLRAAMKPISSLISPLQSFDIASMEPIPSRFERSDTCAVPAAGVVAEAVVAPVIANALLAKLGGDHFSEIHERLEAYRAYLANRLQRKS.

NADP(+) contacts are provided by R40 and R46. FMN contacts are provided by residues 129 to 131 (RSS), 257 to 258 (QA), G302, 317 to 321 (KPISS), and R343.

The protein belongs to the chorismate synthase family. As to quaternary structure, homotetramer. It depends on FMNH2 as a cofactor.

The catalysed reaction is 5-O-(1-carboxyvinyl)-3-phosphoshikimate = chorismate + phosphate. The protein operates within metabolic intermediate biosynthesis; chorismate biosynthesis; chorismate from D-erythrose 4-phosphate and phosphoenolpyruvate: step 7/7. Catalyzes the anti-1,4-elimination of the C-3 phosphate and the C-6 proR hydrogen from 5-enolpyruvylshikimate-3-phosphate (EPSP) to yield chorismate, which is the branch point compound that serves as the starting substrate for the three terminal pathways of aromatic amino acid biosynthesis. This reaction introduces a second double bond into the aromatic ring system. This chain is Chorismate synthase, found in Chlorobium chlorochromatii (strain CaD3).